The sequence spans 114 residues: UPF0757 protein YmgG (114 aa).

Belongs to the UPF0757 family.

The chain is UPF0757 protein YmgG from Shigella flexneri.